A 188-amino-acid chain; its full sequence is Insulin-like growth factor 1 (188 aa).

Residues 45–73 form a b region; that stretch reads GPETLCGAELVDTLQFVCGERGFYFSKPT. Intrachain disulfides connect Cys50-Cys92, Cys62-Cys105, and Cys91-Cys96. The tract at residues 74–85 is c; that stretch reads GYGPSSRRSHNR. The segment at 86–106 is a; sequence GIVDECCFQSCELRRLEMYCA. The interval 107-114 is d; that stretch reads PVKSGKAA. The propeptide at 115–188 is e peptide; sequence RSVRAQRHTD…GNTGGRNYRM (74 aa). Residues 115-188 are disordered; sequence RSVRAQRHTD…GNTGGRNYRM (74 aa). A compositionally biased stretch (basic and acidic residues) spans 140 to 153; that stretch reads RGTERRTAQHPDKT.

The protein belongs to the insulin family. As to expression, all the isoforms are expressed in embryos, juvenile and adult liver, muscle and brain. At least one isoform is expressed in heart, kidney, testes, ovary, adipose tissue and spleen of juvenile salmon.

It is found in the secreted. Its function is as follows. The insulin-like growth factors, isolated from plasma, are structurally and functionally related to insulin but have a much higher growth-promoting activity. Acts as a ligand for IGF1R. Binds to the alpha subunit of IGF1R, leading to the activation of the intrinsic tyrosine kinase activity which autophosphorylates tyrosine residues in the beta subunit thus initiatiating a cascade of down-stream signaling events leading to activation of the PI3K-AKT/PKB and the Ras-MAPK pathways. Binds to integrins. Its binding to integrins and subsequent ternary complex formation with integrins and IGFR1 are essential for IGF1 signaling. The sequence is that of Insulin-like growth factor 1 from Oncorhynchus kisutch (Coho salmon).